A 261-amino-acid chain; its full sequence is Uridine-cytidine kinase 2 (261 aa).

The segment at 1-24 is disordered; that stretch reads MAGDSEQALPKHSPQNGQPFLIGV. ATP is bound at residue 26-34; it reads GGTASGKSS. Asp-83, Tyr-111, His-116, Arg-165, Arg-175, and Gln-183 together coordinate substrate. Residue Asp-212 participates in ATP binding. Positions 238–247 are enriched in polar residues; it reads NGYTNGFTSP. The segment at 238–261 is disordered; that stretch reads NGYTNGFTSPRTRHPSDSNSSRPH.

The protein belongs to the uridine kinase family. As to quaternary structure, homotetramer.

It carries out the reaction uridine + ATP = UMP + ADP + H(+). It catalyses the reaction cytidine + ATP = CMP + ADP + H(+). It participates in pyrimidine metabolism; CTP biosynthesis via salvage pathway; CTP from cytidine: step 1/3. Its pathway is pyrimidine metabolism; UMP biosynthesis via salvage pathway; UMP from uridine: step 1/1. Functionally, phosphorylates uridine and cytidine to uridine monophosphate and cytidine monophosphate. Does not phosphorylate deoxyribonucleosides or purine ribonucleosides. Can use ATP or GTP as a phosphate donor. This chain is Uridine-cytidine kinase 2 (uck2), found in Xenopus tropicalis (Western clawed frog).